Reading from the N-terminus, the 36-residue chain is Cytochrome b6-f complex subunit 5 (36 aa).

The helical transmembrane segment at 5–25 (LLSGIVLGLIPITILGLLMAA) threads the bilayer.

The protein belongs to the PetG family. The 4 large subunits of the cytochrome b6-f complex are cytochrome b6, subunit IV (17 kDa polypeptide, PetD), cytochrome f and the Rieske protein, while the 4 small subunits are PetG, PetL, PetM and PetN. The complex functions as a dimer.

The protein localises to the plastid. It localises to the chloroplast thylakoid membrane. In terms of biological role, component of the cytochrome b6-f complex, which mediates electron transfer between photosystem II (PSII) and photosystem I (PSI), cyclic electron flow around PSI, and state transitions. PetG is required for either the stability or assembly of the cytochrome b6-f complex. In Cyanidioschyzon merolae (strain NIES-3377 / 10D) (Unicellular red alga), this protein is Cytochrome b6-f complex subunit 5.